The following is a 161-amino-acid chain: Type IV major fimbrial protein FimA (161 aa).

Residues 1 to 7 constitute a propeptide, leader sequence; the sequence is MKSLQKG. Phe-8 carries the post-translational modification N-methylphenylalanine. The helical transmembrane segment at 8–28 threads the bilayer; that stretch reads FTLIELMIVVAIIGILAAFAI. Cys-63 and Cys-106 are oxidised to a cystine.

The protein belongs to the N-Me-Phe pilin family. In terms of assembly, the pili are polar flexible filaments of about 5.4 nanometers diameter and 2.5 micrometers average length; they consist of only a single polypeptide chain arranged in a helical configuration of five subunits per turn in the assembled pilus.

Its subcellular location is the fimbrium. The protein localises to the membrane. Functionally, major component of the type IV fimbriae that plays an essential role in twitching motility, natural transformation, and protease secretion. In Dichelobacter nodosus (Bacteroides nodosus), this protein is Type IV major fimbrial protein FimA (fimA).